The sequence spans 530 residues: Arginine--tRNA ligase (530 aa).

Positions 113-123 (ANPTGPLHIGH) match the 'HIGH' region motif.

Belongs to the class-I aminoacyl-tRNA synthetase family. In terms of assembly, monomer.

It is found in the cytoplasm. It catalyses the reaction tRNA(Arg) + L-arginine + ATP = L-arginyl-tRNA(Arg) + AMP + diphosphate. This is Arginine--tRNA ligase from Campylobacter jejuni subsp. jejuni serotype O:23/36 (strain 81-176).